Consider the following 30-residue polypeptide: Chassatide C3 (30 aa).

Positions 1–30 form a cross-link, cyclopeptide (Gly-Asn); sequence GIPCGESCVWIPCISSALGCSCKNKVCYRN. 3 disulfides stabilise this stretch: cysteine 4-cysteine 20, cysteine 8-cysteine 22, and cysteine 13-cysteine 27.

This is a cyclic peptide. Expressed in fruit, pedicel, stem and root but not in leaf (at protein level).

Functionally, probably participates in a plant defense mechanism. This Chassalia chartacea (Chassalia curviflora) protein is Chassatide C3.